A 515-amino-acid polypeptide reads, in one-letter code: Recombining binding protein suppressor of hairless-like protein (515 aa).

Positions 1-40 are disordered; that stretch reads MDPRETTDPSLPPGPLTHLSLPDSSEVRLQSDGPSLLGSW. DNA-binding stretches follow at residues 76–86, 191–196, and 218–223; these read QKSYGNEKRFF, SKPSQK, and RLRSQT. Residues 384-474 form the IPT/TIG domain; sequence PLISTLELSG…YPSPFSFTYT (91 aa).

The protein belongs to the Su(H) family. Interacts weakly with EBNA2. Does not interact with any Notch proteins. As to expression, highly expressed in lung. Also detected in spleen, and brain.

The protein localises to the nucleus. In terms of biological role, putative transcription factor, which cooperates with EBNA2 to activate transcription. The protein is Recombining binding protein suppressor of hairless-like protein (Rbpjl) of Mus musculus (Mouse).